Reading from the N-terminus, the 1142-residue chain is MHIAVDNLTISVPKIDKPTKAALDYVELLRESFSAKKRQKFSKASLAIRPSDFPDLSNQQLCDILVRVAYNGSHIDEDFRKHVLDLVEDQSLTWNQVLLSVIRTQSDQLYMKSQLCELITEMIRFVQIKSFHDPKHADSLISVILPTFVFLTKLILELLSDEDEMETIQIEYETKFPPYHKPLQALNTLIHDNLCGPLLAMYRSSEEVTRQLVLCSEAFSKLERPDESSVGLLDLILEKHQDNCKPTKYEYTPDGLAAYDLKNPSVRILVPIFACFRCHETSKQMAETVQIFVDIMRVSGDDVVFDLLHAAILLKCEESNNLLHLSKQHRLDFRWQSTTFFYKKLPQIIEHLVSFGKVTAEDVQKGMERALNDLTMLFDVADISWQNASFLTVLNALEPLIGSEAANPLRHRRREYMRKTASLTALADSDEKLIENTDIDRLLNAVKQVMNLQFGQNEEFYQEFIRKVNGDDCEDFDAVMSILISEGRLLEVGKAFAMKSKLAQYPSELSLDERIKKFDETFLLLTRIIVKFPGLSIGLLVNGGPGEISIADSIFYRWSMWYVKRVPRKDKSEEKSEEELEAMRIQAKVLIEEINKEVGIEEEIEEEEEDIEPEVVKEMKESGTEKEKEEEEEDGNKETKNETANDEEMPGDEQKTEEKMDTSETPAEPPIQQQSTPEDPPKVEEPAERINQEKPEEKPKEPLEPTWNEMNCALPRISRKKARRYLGLLKQGNPFWSTDNNSLNIGAILAALPSMGKLLIEEHNEEKHRVDRKSAEEHMANIIHALESMPCLFVCLVQWVDCAPASPARTLLAKTMKNALEKRVSSSSASIADDTNLPKWRFILSTCNEMIHELTDRVPVFPDITCTAFSAARRLCPFVTRDEIPDSTKLKHAWYYMCQQSWTSPHALRLLEHANIHSEYNTWIHLYITKIVGGGCGEIMKDQVDMIFGMLMMDDLNVIIRMHEIMMDFWLSEEAGNLQLDGRFDPLSMTAVIRLMANVMLISEWTLDRLINDGPPLVEFDFTSAMTPEPEDPLRREKWVFLLRQMLDRTVNRLFKILRQGVLCTVVNTIVRLIKAIAGSADCKAKRLLIKRIPPEIVFQLAYIEPQCADYALMNAYCDPKNEEHTRTKIRFLCALRRSHIL.

Positions isoleucine 600–proline 613 are enriched in acidic residues. Residues isoleucine 600–threonine 706 are disordered. Basic and acidic residues-rich tracts occupy residues glutamate 614–glutamate 627, aspartate 652–threonine 662, and aspartate 679–leucine 703.

Its subcellular location is the nucleus. It localises to the cytoplasm. Functionally, participates in the inductive signaling pathway downstream of let-60 Ras and the RAF/MAP kinase cascade to regulate specification and differentiation of many cell types. Positively regulates the fate of vulval precursor cells. Required for induction of the P12 and excretory duct cell fates. In males, it is also required for proper formation of spicules. Does not function in the signaling pathway that promotes exit from pachytene. This Caenorhabditis briggsae protein is Protein lin-25.